Here is a 156-residue protein sequence, read N- to C-terminus: Protein E6 (156 aa).

Zinc fingers lie at residues 42 to 78 and 115 to 151; these read CHYC…CSQC and CVRC…CVRC.

It belongs to the papillomaviridae E6 protein family. In terms of assembly, forms homodimers. Interacts with ubiquitin-protein ligase UBE3A/E6-AP; this interaction stimulates UBE3A ubiquitin activity. Interacts with host BAK1.

The protein resides in the host cytoplasm. Its subcellular location is the host nucleus. Functionally, plays a major role in the induction and maintenance of cellular transformation. E6 associates with host UBE3A/E6-AP ubiquitin-protein ligase and modulates its activity. Protects host keratinocytes from apoptosis by mediating the degradation of host BAK1. May also inhibit host immune response. This chain is Protein E6, found in Homo sapiens (Human).